The chain runs to 355 residues: Chorismate synthase (355 aa).

Arg-48 lines the NADP(+) pocket. FMN-binding positions include 125-127 (RSS), 238-239 (NA), Gly-278, 293-297 (KPASS), and Arg-319.

This sequence belongs to the chorismate synthase family. In terms of assembly, homotetramer. It depends on FMNH2 as a cofactor.

It catalyses the reaction 5-O-(1-carboxyvinyl)-3-phosphoshikimate = chorismate + phosphate. It functions in the pathway metabolic intermediate biosynthesis; chorismate biosynthesis; chorismate from D-erythrose 4-phosphate and phosphoenolpyruvate: step 7/7. In terms of biological role, catalyzes the anti-1,4-elimination of the C-3 phosphate and the C-6 proR hydrogen from 5-enolpyruvylshikimate-3-phosphate (EPSP) to yield chorismate, which is the branch point compound that serves as the starting substrate for the three terminal pathways of aromatic amino acid biosynthesis. This reaction introduces a second double bond into the aromatic ring system. The sequence is that of Chorismate synthase from Baumannia cicadellinicola subsp. Homalodisca coagulata.